The chain runs to 137 residues: Probable histone H2AXa (137 aa).

Residues 1–10 (MSSSQGGGGR) are compositionally biased toward gly residues. The tract at residues 1-21 (MSSSQGGGGRGKAKTTKAVSR) is disordered. S134 carries the phosphoserine; by ATM and ATR modification. The [ST]-Q motif signature appears at 134-135 (SQ).

It belongs to the histone H2A family. In terms of assembly, the nucleosome is a histone octamer containing two molecules each of H2A, H2B, H3 and H4 assembled in one H3-H4 heterotetramer and two H2A-H2B heterodimers. The octamer wraps approximately 147 bp of DNA. Interacts with numerous proteins required for DNA damage signaling and repair when phosphorylated on Ser-134. Phosphorylated to form H2AXS139ph (gamma-H2AX) in response to DNA double strand breaks (DSBs) generated by exogenous genotoxic agents and by stalled replication forks, and may also occur during meiotic recombination events. Phosphorylation can extend up to several thousand nucleosomes from the actual site of the DSB and may mark the surrounding chromatin for recruitment of proteins required for DNA damage signaling and repair. Widespread phosphorylation may also serve to amplify the damage signal or aid repair of persistent lesions. H2AXS139ph in response to ionizing radiation is mediated by ATM while defects in DNA replication induce H2AXS139ph subsequent to activation of ATR. Dephosphorylation of H2AXS139ph by PP2A is required for DNA DSB repair.

Its subcellular location is the nucleus. It localises to the chromosome. Variant histone H2A which replaces conventional H2A in a subset of nucleosomes. Nucleosomes wrap and compact DNA into chromatin, limiting DNA accessibility to the cellular machineries which require DNA as a template. Histones thereby play a central role in transcription regulation, DNA repair, DNA replication and chromosomal stability. DNA accessibility is regulated via a complex set of post-translational modifications of histones, also called histone code, and nucleosome remodeling. Required for checkpoint-mediated arrest of cell cycle progression in response to low doses of ionizing radiation and for efficient repair of DNA double strand breaks (DSBs) specifically when modified by C-terminal phosphorylation. This chain is Probable histone H2AXa, found in Oryza sativa subsp. indica (Rice).